A 239-amino-acid chain; its full sequence is MRSGVIAQKVGMTRVFTETGEHIPVTVLKLGNCQVVGHRTTEKNGYVALQLGSGSRKTVYMPKAERGQFAVAKVEPKRKVAEFRVSEDSLIPVGAEILADHFVVGQFVDVTGTTVGKGFAGGMKRWNFGGLRATHGVSISHRSIGSTGGRQDPGKTWKNKKMPGHMGVDRVTTLNLRVVQTDVERGLILVEGAVPGSKGGWISVRDAVKKPLPKEAPKPGKFKVAGEQAAEAPAVQEGA.

2 disordered regions span residues 140–166 and 211–239; these read SHRS…PGHM and PLPK…QEGA. N5-methylglutamine is present on Gln-151.

It belongs to the universal ribosomal protein uL3 family. In terms of assembly, part of the 50S ribosomal subunit. Forms a cluster with proteins L14 and L19. In terms of processing, methylated by PrmB.

Its function is as follows. One of the primary rRNA binding proteins, it binds directly near the 3'-end of the 23S rRNA, where it nucleates assembly of the 50S subunit. The polypeptide is Large ribosomal subunit protein uL3 (Bradyrhizobium sp. (strain BTAi1 / ATCC BAA-1182)).